We begin with the raw amino-acid sequence, 102 residues long: ATP-dependent Clp protease adapter protein ClpS (102 aa).

The protein belongs to the ClpS family. As to quaternary structure, binds to the N-terminal domain of the chaperone ClpA.

In terms of biological role, involved in the modulation of the specificity of the ClpAP-mediated ATP-dependent protein degradation. The chain is ATP-dependent Clp protease adapter protein ClpS from Shewanella sp. (strain ANA-3).